The following is an 85-amino-acid chain: Alpha-insect toxin BjaIT (85 aa).

Positions 1-19 (MNYLVVICFALLLMTGVES) are cleaved as a signal peptide. Residues 21-83 (RDAYIADNLN…VPIRIPGACR (63 aa)) form the LCN-type CS-alpha/beta domain. Intrachain disulfides connect Cys-31–Cys-82, Cys-35–Cys-55, Cys-41–Cys-65, and Cys-45–Cys-67. Residue Arg-83 is modified to Arginine amide.

It belongs to the long (4 C-C) scorpion toxin superfamily. Sodium channel inhibitor family. Alpha subfamily. In terms of tissue distribution, expressed by the venom gland.

The protein localises to the secreted. Alpha toxins bind voltage-independently at site-3 of sodium channels (Nav) and inhibit the inactivation of the activated channels, thereby blocking neuronal transmission. This toxin is active against insects (para/tipE). This Hottentotta judaicus (Black scorpion) protein is Alpha-insect toxin BjaIT.